The sequence spans 456 residues: Glutamate--tRNA ligase 2 (456 aa).

The 'HIGH' region motif lies at 8-18 (PSPTGYIHIGN). A 'KMSKS' region motif is present at residues 249–253 (GLSKR). K252 is an ATP binding site.

This sequence belongs to the class-I aminoacyl-tRNA synthetase family. Glutamate--tRNA ligase type 1 subfamily. As to quaternary structure, monomer.

Its subcellular location is the cytoplasm. The enzyme catalyses tRNA(Glu) + L-glutamate + ATP = L-glutamyl-tRNA(Glu) + AMP + diphosphate. Its function is as follows. Catalyzes the attachment of glutamate to tRNA(Glu) in a two-step reaction: glutamate is first activated by ATP to form Glu-AMP and then transferred to the acceptor end of tRNA(Glu). This is Glutamate--tRNA ligase 2 from Bartonella bacilliformis (strain ATCC 35685 / KC583 / Herrer 020/F12,63).